The sequence spans 425 residues: UDP-N-acetylglucosamine 1-carboxyvinyltransferase (425 aa).

25 to 26 (KN) contributes to the phosphoenolpyruvate binding site. Arg-95 serves as a coordination point for UDP-N-acetyl-alpha-D-glucosamine. Cys-119 functions as the Proton donor in the catalytic mechanism. Residue Cys-119 is modified to 2-(S-cysteinyl)pyruvic acid O-phosphothioketal. UDP-N-acetyl-alpha-D-glucosamine-binding positions include 124-128 (RPVDQ), Asp-306, and Ile-328.

The protein belongs to the EPSP synthase family. MurA subfamily.

The protein localises to the cytoplasm. It carries out the reaction phosphoenolpyruvate + UDP-N-acetyl-alpha-D-glucosamine = UDP-N-acetyl-3-O-(1-carboxyvinyl)-alpha-D-glucosamine + phosphate. It functions in the pathway cell wall biogenesis; peptidoglycan biosynthesis. Cell wall formation. Adds enolpyruvyl to UDP-N-acetylglucosamine. This is UDP-N-acetylglucosamine 1-carboxyvinyltransferase from Thermus thermophilus (strain ATCC 27634 / DSM 579 / HB8).